Reading from the N-terminus, the 269-residue chain is Sulfur carrier protein FdhD (269 aa).

Catalysis depends on cysteine 111, which acts as the Cysteine persulfide intermediate.

The protein belongs to the FdhD family.

The protein resides in the cytoplasm. Required for formate dehydrogenase (FDH) activity. Acts as a sulfur carrier protein that transfers sulfur from IscS to the molybdenum cofactor prior to its insertion into FDH. This is Sulfur carrier protein FdhD from Brucella abortus biovar 1 (strain 9-941).